The following is a 245-amino-acid chain: Probable transcriptional regulatory protein CPR_1922 (245 aa).

Belongs to the TACO1 family.

The protein resides in the cytoplasm. The sequence is that of Probable transcriptional regulatory protein CPR_1922 from Clostridium perfringens (strain SM101 / Type A).